A 507-amino-acid polypeptide reads, in one-letter code: MKIDLNKVAREIEVDNRIPLRNYYRIADNLLRQASIYREEKNVVDLYIMLLRYSSLISETIPFHRDYQASLPQERLGSRKRLRAVINELESLKPEFNQLVDKLNRVEDESRQDGSDLPVVSYSSDAVEWPPAHKASYSRPDINKPLPTSQPSWTYNNNLTSSSNRTQIDQQFQKLSFDFLPPNQATLSRHSFLGPNGLKRQMVAPKSEIKVQYPSNTDWGSADNSGLIEAGPSSSSASLNGDSQEVSTLNSVLSLDDGRWQRHSEAVNSQFISDATEDPFQFVGMKQPSPPPVLAQVHQELAQICPSKVADPRPGPAIPSLEGKEGSNSYQHLHVPVRIMDDFLRLARSNTERNLETCGVLAGSLKNRVFHITTLIIPKQESTSDSCQTLNEEEIFEVQDRLSLFPLGWIHTHPTQTCFMSSVDLHTHYSYQIMLPEAVAIVMAPTDESTPHGIFHLSDPSGVSVIRNCQQRGFHPHEESEDGNPIYEHCSHVFLNAKLKYEVLDLR.

The stretch at 73-107 (QERLGSRKRLRAVINELESLKPEFNQLVDKLNRVE) forms a coiled coil. 2 disordered regions span residues 133 to 162 (HKAS…LTSS) and 214 to 242 (PSNT…LNGD). Composition is skewed to polar residues over residues 146 to 162 (LPTS…LTSS), 214 to 224 (PSNTDWGSADN), and 232 to 242 (PSSSSASLNGD). Residues 333–463 (LHVPVRIMDD…IFHLSDPSGV (131 aa)) form the MPN domain. His411, His413, Asp424, His426, Cys469, His475, and His477 together coordinate Zn(2+). Positions 411-424 (HTHPTQTCFMSSVD) match the JAMM motif motif.

This sequence belongs to the peptidase M67C family. As to quaternary structure, interacts with PATL1 and PATL2. May also bind to HSC70-1, HSC70-3, VHA-A, BGLU23 and EPSIN1. Interacts with BRO1/ALIX. Zn(2+) serves as cofactor.

Its subcellular location is the membrane. The protein localises to the cytoplasm. The protein resides in the vacuole membrane. It localises to the late endosome. Functionally, zinc metalloprotease that cleaves 'Lys-48'- and 'Lys-63'-linked polyubiquitin chains, but is not implicated in protein degradation by the 26S proteasome, deneddylation, or desumoylation. Required for intracellular trafficking (e.g. trafficking from the Golgi to the vacuole and the vacuolar trafficking of endocytosed cargo), endocytosis and vacuole biogenesis. In Arabidopsis thaliana (Mouse-ear cress), this protein is AMSH-like ubiquitin thioesterase 3 (AMSH3).